Reading from the N-terminus, the 144-residue chain is Histone H2B.2, sperm (144 aa).

The tract at residues 1 to 51 (MPRSPAKTSPRKGSPRKGSPSRKASPKRGGKGAKRAGKGGRRRRVVKRRRR) is disordered. 5 short sequence motifs (SPKK motif) span residues 4–7 (SPAK), 9–12 (SPRK), 14–17 (SPRK), 19–22 (SPSR), and 25–28 (SPKR). A phosphoserine mark is found at S14, S19, and S25. Positions 24 to 51 (ASPKRGGKGAKRAGKGGRRRRVVKRRRR) are enriched in basic residues. Residue S131 is glycosylated (O-linked (GlcNAc) serine). A Glycyl lysine isopeptide (Lys-Gly) (interchain with G-Cter in ubiquitin) cross-link involves residue K139.

Belongs to the histone H2B family. In terms of assembly, the nucleosome is a histone octamer containing two molecules each of H2A, H2B, H3 and H4 assembled in one H3-H4 heterotetramer and two H2A-H2B heterodimers. The octamer wraps approximately 147 bp of DNA. Post-translationally, monoubiquitination of Lys-139 gives a specific tag for epigenetic transcriptional activation and is also prerequisite for histone H3 'Lys-4' and 'Lys-79' methylation. Phosphorylated on SPKK motifs 3, 4 and 5; which may regulate DNA binding. Dephosphorylated during maturation of spermatids to mature sperm and rephosphorylated at fertilization.

The protein resides in the nucleus. Its subcellular location is the chromosome. In terms of biological role, core component of nucleosome. Nucleosomes wrap and compact DNA into chromatin, limiting DNA accessibility to the cellular machineries which require DNA as a template. Histones thereby play a central role in transcription regulation, DNA repair, DNA replication and chromosomal stability. DNA accessibility is regulated via a complex set of post-translational modifications of histones, also called histone code, and nucleosome remodeling. This chain is Histone H2B.2, sperm, found in Parechinus angulosus (Angulate sea urchin).